Here is a 375-residue protein sequence, read N- to C-terminus: Anhydro-N-acetylmuramic acid kinase 1 (375 aa).

An ATP-binding site is contributed by 20–27 (GTSFDGVD). The tract at residues 351-375 (APSTTGVAAPVGGGRRSKPGARELS) is disordered.

Belongs to the anhydro-N-acetylmuramic acid kinase family.

The enzyme catalyses 1,6-anhydro-N-acetyl-beta-muramate + ATP + H2O = N-acetyl-D-muramate 6-phosphate + ADP + H(+). The protein operates within amino-sugar metabolism; 1,6-anhydro-N-acetylmuramate degradation. It functions in the pathway cell wall biogenesis; peptidoglycan recycling. In terms of biological role, catalyzes the specific phosphorylation of 1,6-anhydro-N-acetylmuramic acid (anhMurNAc) with the simultaneous cleavage of the 1,6-anhydro ring, generating MurNAc-6-P. Is required for the utilization of anhMurNAc either imported from the medium or derived from its own cell wall murein, and thus plays a role in cell wall recycling. The polypeptide is Anhydro-N-acetylmuramic acid kinase 1 (Jannaschia sp. (strain CCS1)).